Consider the following 264-residue polypeptide: MPLVVKGKVNINEFIDLSKSEKLLPSMFTPVKSVMVSKVDKIMVHENESLSEVNLLKGVKLIEGGYVWLVGLVVSGEWNLPDNCRGGVSVCMVDKRMERADEATLGSYYTAAAKKRFQFKVVPNYGITTEDAEKNIWQVLVNIKNVKMSAGYCPLSLEFVSVCIVYKNNIKLGLREKVTSVNDGGPMELSEEVVDEFMENVPMSVRLAKFRTKSSKRGPKNNNNLGKGRSGGRPKPKSVDEVEEEFDNLIEDEAETSVADSDSY.

The segment at 211-264 (RTKSSKRGPKNNNNLGKGRSGGRPKPKSVDEVEEEFDNLIEDEAETSVADSDSY) is disordered. Residues 241–255 (EVEEEFDNLIEDEAE) show a composition bias toward acidic residues.

It belongs to the tobamovirus movement protein family. In terms of assembly, binds to host RBCS at the plasmodesmata; this interaction seems required for viral systemic movement. In resistant plants, interacts with host MBP2C at host microtubules; this interaction prevents virus cell to cell movement. In resistant plants, interacts with host resistance (R) protein (e.g. tomato ToMV resistance protein TM-2(2), AC Q71BG9) at the host plasma membrane; this interaction triggers host defense responses leading to programmed cell death.

The protein resides in the host cytoplasm. The protein localises to the host cytoskeleton. It is found in the host cell junction. Its subcellular location is the host plasmodesma. Its function is as follows. Transports viral genome to neighboring plant cells directly through plasmosdesmata, without any budding. The movement protein allows efficient cell to cell propagation, by bypassing the host cell wall barrier. Forms a ribonucleoprotein complex with viral RNA. Binds microtubules and modulates microtubule stability. Can bind double-stranded DNA. Triggers host hypersensitive defense reaction in incompatible plants harboring resistance (R) proteins. The chain is Movement protein (MP) from Antirrhinum majus (Garden snapdragon).